The sequence spans 358 residues: Peptide chain release factor 1 (358 aa).

N5-methylglutamine is present on Q235.

The protein belongs to the prokaryotic/mitochondrial release factor family. In terms of processing, methylated by PrmC. Methylation increases the termination efficiency of RF1.

Its subcellular location is the cytoplasm. Peptide chain release factor 1 directs the termination of translation in response to the peptide chain termination codons UAG and UAA. This chain is Peptide chain release factor 1, found in Nitrosospira multiformis (strain ATCC 25196 / NCIMB 11849 / C 71).